A 103-amino-acid chain; its full sequence is Co-chaperonin GroES (103 aa).

The protein belongs to the GroES chaperonin family. Heptamer of 7 subunits arranged in a ring. Interacts with the chaperonin GroEL.

The protein localises to the cytoplasm. Its function is as follows. Together with the chaperonin GroEL, plays an essential role in assisting protein folding. The GroEL-GroES system forms a nano-cage that allows encapsulation of the non-native substrate proteins and provides a physical environment optimized to promote and accelerate protein folding. GroES binds to the apical surface of the GroEL ring, thereby capping the opening of the GroEL channel. The protein is Co-chaperonin GroES of Crocosphaera subtropica (strain ATCC 51142 / BH68) (Cyanothece sp. (strain ATCC 51142)).